Here is a 389-residue protein sequence, read N- to C-terminus: Vacuolar protein sorting-associated protein vts1 (389 aa).

Positions 149 to 335 are disordered; the sequence is NPQRKAKTPS…RPSQPTKASP (187 aa). Polar residues-rich tracts occupy residues 156–177, 184–219, and 227–282; these read TPSNHATEELQQSSTNSTTLPT, TNASASHETSFALPTTSPAASLSISPTKSAAVSSEP, and SLSS…PESK. Over residues 294–306 the composition is skewed to low complexity; that stretch reads TSITTTSTSIDPS. Residues 308–334 are compositionally biased toward polar residues; the sequence is AFSSKSTLATTRTNAPLSRPSQPTKAS.

The protein belongs to the VTA1 family. As to quaternary structure, homodimer (in cytoplasm).

It is found in the cytoplasm. It localises to the endosome membrane. Its function is as follows. Has a role in the formation of the multivesicular body (MVB). Required for the sorting of lipids to form intralumenal vesicles and for fluid-phase transport to the vacuole. Required for sorting several plasma membrane proteins into the MVB. This is Vacuolar protein sorting-associated protein vts1 (vts1) from Schizosaccharomyces pombe (strain 972 / ATCC 24843) (Fission yeast).